The sequence spans 146 residues: Transcription initiation factor TFIID subunit 10b (146 aa).

The segment at 16–43 is disordered; sequence GASSHGQSSGGGGGGDRDRTTPSSHLSD.

It belongs to the TAF10 family. Belongs to the TFIID complex which is composed of TATA binding protein (Tbp) and a number of TBP-associated factors (TAFs). The N-terminus interacts with the histone fold of Taf8. At embryonic stage 9, expression is seen in the mesodermal layer and midgut primordia. The mesoderm-specific expression persists in later stages of development and at its highest level is detected in midgut, hindgut, and differentiating somatic muscle fibers. Coexpressed with Taf10 in the lateral epidermis and anal plate.

Its subcellular location is the cytoplasm. It localises to the nucleus. TFIID is a multimeric protein complex that plays a central role in mediating promoter responses to various activators and repressors. This chain is Transcription initiation factor TFIID subunit 10b, found in Drosophila melanogaster (Fruit fly).